Consider the following 294-residue polypeptide: 33 kDa chaperonin (294 aa).

2 disulfide bridges follow: cysteine 239–cysteine 241 and cysteine 272–cysteine 275.

The protein belongs to the HSP33 family. Post-translationally, under oxidizing conditions two disulfide bonds are formed involving the reactive cysteines. Under reducing conditions zinc is bound to the reactive cysteines and the protein is inactive.

It is found in the cytoplasm. Redox regulated molecular chaperone. Protects both thermally unfolding and oxidatively damaged proteins from irreversible aggregation. Plays an important role in the bacterial defense system toward oxidative stress. The polypeptide is 33 kDa chaperonin (Listeria monocytogenes serotype 4b (strain CLIP80459)).